Consider the following 439-residue polypeptide: COBRA-like protein 7 (439 aa).

The N-terminal stretch at 1–22 (MDVDQLILFVFVCCLSSRFADA) is a signal peptide. 6 N-linked (GlcNAc...) asparagine glycosylation sites follow: asparagine 138, asparagine 181, asparagine 186, asparagine 232, asparagine 312, and asparagine 346. Asparagine 412 carries the GPI-anchor amidated asparagine lipid modification. Positions 413 to 439 (GGPDSRVSAAQLIASSCLLLPFIFLIM) are cleaved as a propeptide — removed in mature form.

The protein belongs to the COBRA family.

The protein resides in the cell membrane. Its function is as follows. Involved in determining the orientation of cell expansion, probably by playing an important role in cellulose deposition. May act by recruiting cellulose synthesizing complexes to discrete positions on the cell surface. The chain is COBRA-like protein 7 (BC1LP1) from Oryza sativa subsp. japonica (Rice).